A 59-amino-acid polypeptide reads, in one-letter code: Large ribosomal subunit protein uL30 (59 aa).

It belongs to the universal ribosomal protein uL30 family. In terms of assembly, part of the 50S ribosomal subunit.

This chain is Large ribosomal subunit protein uL30, found in Clostridium beijerinckii (strain ATCC 51743 / NCIMB 8052) (Clostridium acetobutylicum).